The chain runs to 256 residues: Thioredoxin-dependent peroxide reductase, mitochondrial (256 aa).

Residues 1–61 (MAAAVGRLLR…KLFSTSSSYH (61 aa)) constitute a mitochondrion transit peptide. In terms of domain architecture, Thioredoxin spans 63-221 (PAVTQHAPYF…TLRLVKAFQY (159 aa)). Position 83 is an N6-succinyllysine (Lys-83). Lys-91 bears the N6-acetyllysine; alternate mark. N6-succinyllysine; alternate is present on Lys-91. Cys-108 functions as the Cysteine sulfenic acid (-SOH) intermediate in the catalytic mechanism. Residue Thr-146 is modified to Phosphothreonine.

Belongs to the peroxiredoxin family. AhpC/Prx1 subfamily. As to quaternary structure, homodimer; disulfide-linked, upon oxidation. 6 homodimers assemble to form a ring-like dodecamer. Interacts with NEK6. Interacts with LRRK2. Interacts with MAP3K13. Interacts with RPS6KC1 (via PX domain). Post-translationally, phosphorylated by LRRK2; phosphorylation reduces perodixase activity. In terms of processing, the enzyme can be inactivated by further oxidation of the cysteine sulfenic acid (C(P)-SOH) to sulphinic acid (C(P)-SO2H) and sulphonic acid (C(P)-SO3H) instead of its condensation to a disulfide bond. S-palmitoylated.

The protein resides in the mitochondrion. It localises to the cytoplasm. It is found in the early endosome. The catalysed reaction is a hydroperoxide + [thioredoxin]-dithiol = an alcohol + [thioredoxin]-disulfide + H2O. Functionally, thiol-specific peroxidase that catalyzes the reduction of hydrogen peroxide and organic hydroperoxides to water and alcohols, respectively. Plays a role in cell protection against oxidative stress by detoxifying peroxides. Acts synergistically with MAP3K13 to regulate the activation of NF-kappa-B in the cytosol. Required for the maintenance of physical strength. The sequence is that of Thioredoxin-dependent peroxide reductase, mitochondrial (PRDX3) from Pongo abelii (Sumatran orangutan).